The primary structure comprises 181 residues: Aminoglycoside 2'-N-acetyltransferase (181 aa).

The N-acetyltransferase domain maps to 11–162; the sequence is VHTADLDSET…DGTVFVLPID (152 aa). Residues D35 and 82–83 contribute to the substrate site; that span reads EG. CoA-binding positions include 84-86 and 91-96; these read VAV and RGQRLV. Substrate contacts are provided by residues S117 and 151–152; that span reads DD.

This sequence belongs to the AAC(2')-I acetyltransferase family. In terms of assembly, homodimer.

Functionally, catalyzes the coenzyme A-dependent acetylation of the 2' hydroxyl or amino group of a broad spectrum of aminoglycosides. It confers resistance to aminoglycosides. This Mycobacterium bovis (strain ATCC BAA-935 / AF2122/97) protein is Aminoglycoside 2'-N-acetyltransferase (aac).